The primary structure comprises 44 residues: Defensin-like peptide (44 aa).

3 disulfides stabilise this stretch: cysteine 7-cysteine 32, cysteine 18-cysteine 40, and cysteine 22-cysteine 42.

As to expression, hemolymph.

Its subcellular location is the secreted. Its function is as follows. Has antibacterial activity against the Gram-positive bacterium S.lutea (MIC=1.9 uM). Lacks antibacterial activity against the Gram-positive bacteria L.monocytogenes and M.luteus, and the Gram-negative bacteria E.coli D31, E.coli ATCC 25922, and S.typhimurium. Has antifungal activity against A.niger (MIC=2.9 uM), C.albicans (MIC=2.9 uM), C.fructus (MIC=2.9 uM), C.wickerhamii (MIC=2.9 uM), P.pastoris (MIC=2.9 uM), P.stiptis (MIC=2.9 uM), P.tannophilus (MIC=2.9 uM), T.harzianum (MIC=2.9 uM), and Z.marxianus (MIC=2.9 uM), but lacks antifungal activity against C.albidus, F.oxysporum, and S.cerevisiae. The sequence is that of Defensin-like peptide from Galleria mellonella (Greater wax moth).